A 212-amino-acid polypeptide reads, in one-letter code: Glycerol-3-phosphate acyltransferase (212 aa).

Helical transmembrane passes span 3-23 (ILLA…VIVS), 51-71 (KAAI…VWLA), 78-98 (DVAI…PVFF), 115-135 (AVHP…AFFF), and 139-159 (SLAA…LFGT).

Belongs to the PlsY family. In terms of assembly, probably interacts with PlsX.

The protein resides in the cell inner membrane. The enzyme catalyses an acyl phosphate + sn-glycerol 3-phosphate = a 1-acyl-sn-glycero-3-phosphate + phosphate. It functions in the pathway lipid metabolism; phospholipid metabolism. Catalyzes the transfer of an acyl group from acyl-phosphate (acyl-PO(4)) to glycerol-3-phosphate (G3P) to form lysophosphatidic acid (LPA). This enzyme utilizes acyl-phosphate as fatty acyl donor, but not acyl-CoA or acyl-ACP. This is Glycerol-3-phosphate acyltransferase from Burkholderia multivorans (strain ATCC 17616 / 249).